A 617-amino-acid chain; its full sequence is MSYRGRGGGYNNNRGQFSSGPHQHQQNVDSFVAANQYPIEIMGWNGASSGECINFISRKCKVIVSNYSVDSNSGVLKGYVKNESQANTLLNWSGVKFAGQSLRFSKGVSNISNQMGGGASTGSQSTIETISQFLKARYQPEIKMLNLSNVKQDPTLTAQGFFGSLSVSSKFFPALMKVASDLKLDVDSIDLSNNELQDLQTLTSMAQTFPKLQNLSLQNNNFTKIKVFETWRHKLNFLRELILFNNPIVQTNDPAEIQTIKLELMKSFPRLVVLSGEILRNEQVLIANLSFPFESPETMFFQDEDSRNLATNFIANYLKLWDANRSELMILYQNESQFSMQVDSSHPHLIESGNSGYSGSTDFGYYLNNSRNLTRVSSIKARMAKLSIGQEQIYKSFQQLPKTRHDIIATPELFSMEVYKFPTLNGIMITLHGSFDEVAQPEVDGSASSAPSGPRGGSRYHSGPKHKRIPLSKKSFDRTFVVIPGPNGSMIVASDTLLIRPYTSDFPWKVQKLPSNPTAATPGVSATSTPSPLPPTTITTPQLAPPGTGPTTADLPADIKARLNQIQQELLVKILLETKLNINYGIMLCEQSNWDYQQASVNFKNSAASLPSDAFVQ.

The span at 1–10 (MSYRGRGGGY) shows a compositional bias: gly residues. Positions 1–24 (MSYRGRGGGYNNNRGQFSSGPHQH) are disordered. 3 LRR repeats span residues 185-206 (DVDS…TSMA), 211-232 (KLQN…ETWR), and 237-258 (FLRE…AEIQ). The 191-residue stretch at 309–499 (LATNFIANYL…MIVASDTLLI (191 aa)) folds into the NTF2 domain. Disordered stretches follow at residues 442–469 (EVDG…HKRI) and 513–554 (LPSN…TTAD). 2 stretches are compositionally biased toward low complexity: residues 445-459 (GSAS…GGSR) and 526-542 (ATST…TTPQ). One can recognise a TAP-C domain in the interval 565 to 617 (QIQQELLVKILLETKLNINYGIMLCEQSNWDYQQASVNFKNSAASLPSDAFVQ).

Belongs to the NXF family. As to quaternary structure, interacts with nucleoporin complex protein MTR2.

The protein resides in the nucleus. It localises to the cytoplasm. Involved in the export of mRNA from the nucleus to the cytoplasm. The protein is mRNA export factor MEX67 of Candida albicans (strain SC5314 / ATCC MYA-2876) (Yeast).